A 294-amino-acid polypeptide reads, in one-letter code: 4-hydroxy-tetrahydrodipicolinate synthase (294 aa).

Thr-45 provides a ligand contact to pyruvate. The Proton donor/acceptor role is filled by Tyr-133. The Schiff-base intermediate with substrate role is filled by Lys-161. Position 203 (Ile-203) interacts with pyruvate.

Belongs to the DapA family. As to quaternary structure, homotetramer; dimer of dimers.

The protein resides in the cytoplasm. It catalyses the reaction L-aspartate 4-semialdehyde + pyruvate = (2S,4S)-4-hydroxy-2,3,4,5-tetrahydrodipicolinate + H2O + H(+). The protein operates within amino-acid biosynthesis; L-lysine biosynthesis via DAP pathway; (S)-tetrahydrodipicolinate from L-aspartate: step 3/4. Catalyzes the condensation of (S)-aspartate-beta-semialdehyde [(S)-ASA] and pyruvate to 4-hydroxy-tetrahydrodipicolinate (HTPA). In Shewanella frigidimarina (strain NCIMB 400), this protein is 4-hydroxy-tetrahydrodipicolinate synthase.